Reading from the N-terminus, the 244-residue chain is Mitochondrial import inner membrane translocase subunit Tim21 (244 aa).

A mitochondrion-targeting transit peptide spans 1–18; that stretch reads MICAFLRVVQHAEKLHGS. The disordered stretch occupies residues 65–96; that stretch reads TQGPDPRKAKEDSTKQVSIRRNQREETGVSMS. The span at 69–78 shows a compositional bias: basic and acidic residues; it reads DPRKAKEDST. Residues 107–127 form a helical membrane-spanning segment; that stretch reads SYLIVVLFGVGLTGGLLYAIF.

The protein belongs to the TIM21 family. In terms of assembly, component of the TIM23 complex. Component of the MITRAC (mitochondrial translation regulation assembly intermediate of cytochrome c oxidase complex) complex, the core components of this complex being COA3/MITRAC12 and COX14. Interacts with COA3 and MT-CO1/COX1.

The protein resides in the mitochondrion membrane. In terms of biological role, participates in the translocation of transit peptide-containing proteins across the mitochondrial inner membrane. Also required for assembly of mitochondrial respiratory chain complex I and complex IV as component of the MITRAC (mitochondrial translation regulation assembly intermediate of cytochrome c oxidase complex) complex. Probably shuttles between the presequence translocase and respiratory-chain assembly intermediates in a process that promotes incorporation of early nuclear-encoded subunits into these complexes. This chain is Mitochondrial import inner membrane translocase subunit Tim21 (Timm21), found in Mus musculus (Mouse).